A 309-amino-acid chain; its full sequence is Probable 2,4-dienoyl-CoA reductase 3 [(3E)-enoyl-CoA-producing] (309 aa).

NADP(+) is bound by residues 32–37 (GGGTGI), R57, and D83. Position 57 (R57) interacts with substrate. Residues F116 and S124 each contribute to the substrate site. Y166 acts as the Proton acceptor in catalysis. NADP(+)-binding positions include K181 and 207 to 210 (PGPI). Position 218 (R218) interacts with substrate.

Belongs to the short-chain dehydrogenases/reductases (SDR) family. 2,4-dienoyl-CoA reductase subfamily.

It catalyses the reaction a (2E,4E)-dienoyl-CoA + NADPH + H(+) = a 4,5-saturated-(3E)-enoyl-CoA + NADP(+). The enzyme catalyses a (2E,4Z)-dienoyl-CoA + NADPH + H(+) = a 4,5-saturated-(3E)-enoyl-CoA + NADP(+). Its function is as follows. Auxiliary enzyme of beta-oxidation. It participates in the metabolism of unsaturated fatty enoyl-CoA esters having double bonds in both even- and odd-numbered positions. Catalyzes the NADP-dependent reduction of 2,4-dienoyl-CoA to yield trans-3-enoyl-CoA. This Caenorhabditis elegans protein is Probable 2,4-dienoyl-CoA reductase 3 [(3E)-enoyl-CoA-producing].